The sequence spans 614 residues: Probable NOT transcription complex subunit VIP2 (614 aa).

3 disordered regions span residues 1 to 46 (MSNL…NLQG), 58 to 89 (NMQG…SSGR), and 361 to 391 (NLGA…GLRP). Residues 364–381 (ATYSSHRPQQQPQHTSST) are compositionally biased toward polar residues.

Belongs to the CNOT2/3/5 family. Interacts with Agrobacterium tumefaciens VirE2. Binds to VIP1. Forms a complex made of Agrobacterium VirE2, VIP1, VIP2 and single-stranded DNA (ssDNA).

The protein localises to the nucleus. Transcriptional regulator required for Agrobacterium-mediated stable genetic transformation by T-DNA integration in host genome, but not for T-DNA transient expression. The sequence is that of Probable NOT transcription complex subunit VIP2 (VIP2) from Arabidopsis thaliana (Mouse-ear cress).